A 469-amino-acid polypeptide reads, in one-letter code: MKRLSGWDAVLLYSETPNVHMHTLKVAVIELDSDRQEFGVDAFREVIAGRLHKLEPLGYQLVDVPLKFHHPMWREHCQVDLNYHIRPWRLRAPGGRRELDEAVGEIASTPLNRDHPLWEMYFVEGLANHRIAVVAKIHHALADGVASANMMARGMDLLPGPEVGRYVPDPAPTKRQLLSAAFIDHLRHLGRIPATIRYTTQGLGRVRRSSRKLSPALTMPFTPPPTFMNHRLTPERRFATATLALIDVKATAKLLGATINDMVLAMSTGALRTLLLRYDGKAEPLLASVPVSYDFSPERISGNRFTGMLVALPADSDDPLQRVRVCHENAVSAKESHQLLGPELISRWAAYWPPAGAEALFRWLSERDGQNKVLNLNISNVPGPRERGRVGAALVTEIYSVGPLTAGSGLNITVWSYVDQLNISVLTDGSTVQDPHEVTAGMIADFIEIRRAAGLSVELTVVESAMAQA.

Catalysis depends on H139, which acts as the Proton acceptor.

It belongs to the long-chain O-acyltransferase family.

It carries out the reaction an acyl-CoA + a 1,2-diacyl-sn-glycerol = a triacyl-sn-glycerol + CoA. Its pathway is glycerolipid metabolism; triacylglycerol biosynthesis. In Mycobacterium tuberculosis (strain CDC 1551 / Oshkosh), this protein is Putative diacyglycerol O-acyltransferase MT0231.